The sequence spans 160 residues: Large ribosomal subunit protein uL22c (160 aa).

This sequence belongs to the universal ribosomal protein uL22 family. Part of the 50S ribosomal subunit.

It is found in the plastid. Its subcellular location is the chloroplast. This protein binds specifically to 23S rRNA. Its function is as follows. The globular domain of the protein is located near the polypeptide exit tunnel on the outside of the subunit, while an extended beta-hairpin is found that lines the wall of the exit tunnel in the center of the 70S ribosome. The polypeptide is Large ribosomal subunit protein uL22c (rpl22) (Lepidium virginicum (Virginia pepperweed)).